The chain runs to 284 residues: Bifunctional protein FolD (284 aa).

NADP(+) contacts are provided by residues 165 to 167 (GRS) and serine 190.

The protein belongs to the tetrahydrofolate dehydrogenase/cyclohydrolase family. Homodimer.

It carries out the reaction (6R)-5,10-methylene-5,6,7,8-tetrahydrofolate + NADP(+) = (6R)-5,10-methenyltetrahydrofolate + NADPH. The enzyme catalyses (6R)-5,10-methenyltetrahydrofolate + H2O = (6R)-10-formyltetrahydrofolate + H(+). Its pathway is one-carbon metabolism; tetrahydrofolate interconversion. In terms of biological role, catalyzes the oxidation of 5,10-methylenetetrahydrofolate to 5,10-methenyltetrahydrofolate and then the hydrolysis of 5,10-methenyltetrahydrofolate to 10-formyltetrahydrofolate. The sequence is that of Bifunctional protein FolD from Streptococcus equi subsp. equi (strain 4047).